Consider the following 360-residue polypeptide: Flavone O-methyltransferase 1 (360 aa).

127–133 is a binding site for substrate; that stretch reads MNQDKVL. The tract at residues 159–177 is substrate binding; the sequence is AFEYHGTDPRFNRVFNEGM. Residues G205, D228, D248, M249, and K262 each coordinate S-adenosyl-L-methionine. The active-site Proton acceptor is the H266.

This sequence belongs to the class I-like SAM-binding methyltransferase superfamily. Cation-independent O-methyltransferase family. COMT subfamily. In terms of assembly, homodimer.

Flavone-specific O-methyltransferase with a preference for flavones &gt; flavonols. Active with tricetin, luteolin, quercitin and eriodictyol. Very low activity with phenylpropanoids (5-hydroxyferulic acid and caffeic acid). Catalyzes the sequential O-methylation of tricetin via 3'-O-methyltricetin, 3',5'-O-methyltricetin to 3',4',5'-O-trimethyltricetin. The protein is Flavone O-methyltransferase 1 (OMT1) of Triticum aestivum (Wheat).